The sequence spans 122 residues: Large ribosomal subunit protein uL14 (122 aa).

It belongs to the universal ribosomal protein uL14 family. In terms of assembly, part of the 50S ribosomal subunit. Forms a cluster with proteins L3 and L19. In the 70S ribosome, L14 and L19 interact and together make contacts with the 16S rRNA in bridges B5 and B8.

Binds to 23S rRNA. Forms part of two intersubunit bridges in the 70S ribosome. This is Large ribosomal subunit protein uL14 from Fusobacterium nucleatum subsp. nucleatum (strain ATCC 25586 / DSM 15643 / BCRC 10681 / CIP 101130 / JCM 8532 / KCTC 2640 / LMG 13131 / VPI 4355).